Consider the following 160-residue polypeptide: RNA pyrophosphohydrolase (160 aa).

Residues 10–154 enclose the Nudix hydrolase domain; sequence PYRKCVGVVL…KRDVYEQVFD (145 aa). The short motif at 44–65 is the Nudix box element; that stretch reads GGIEDGEDARTAALRELVEETG.

The protein belongs to the Nudix hydrolase family. RppH subfamily. It depends on a divalent metal cation as a cofactor.

Functionally, accelerates the degradation of transcripts by removing pyrophosphate from the 5'-end of triphosphorylated RNA, leading to a more labile monophosphorylated state that can stimulate subsequent ribonuclease cleavage. This Dinoroseobacter shibae (strain DSM 16493 / NCIMB 14021 / DFL 12) protein is RNA pyrophosphohydrolase.